Reading from the N-terminus, the 103-residue chain is c-Myc-binding protein (103 aa).

This sequence belongs to the AMY1 family. In terms of assembly, binds via its C-terminal region to the N-terminal region of MYC. Associates with AKAP1/S-AKAP84. Interacts with MYCBPAP. Interacts with CFAP91.

The protein localises to the cytoplasm. The protein resides in the nucleus. May control the transcriptional activity of MYC. Stimulates the activation of E box-dependent transcription by MYC. In Bos taurus (Bovine), this protein is c-Myc-binding protein (MYCBP).